Here is a 118-residue protein sequence, read N- to C-terminus: DNA polymerase epsilon subunit 4 (118 aa).

Composition is skewed to low complexity over residues 1 to 11 (MAAAAAAGSGT) and 19 to 35 (GGEAAASQAQAPTSAPG). Residues 1-37 (MAAAAAAGSGTPREEEAPGGEAAASQAQAPTSAPGGV) form a disordered region. The residue at position 2 (Ala2) is an N-acetylalanine. Thr11 is subject to Phosphothreonine. Ser25 is subject to Phosphoserine.

Component of the DNA polymerase epsilon complex consisting of four subunits: the catalytic subunit POLE and the accessory subunits POLE2, POLE3 and POLE4. Interaction with POLE3 is a prerequisite for further binding with POLE and POLE2.

It is found in the nucleus. Its function is as follows. Accessory component of the DNA polymerase epsilon complex. Participates in DNA repair and in chromosomal DNA replication. The polypeptide is DNA polymerase epsilon subunit 4 (Pole4) (Mus musculus (Mouse)).